The following is a 482-amino-acid chain: MKTKNTFLVSTKSETSIGQITQIIGPVLDVSFPPGNLPNIYNSLIVKGQKDDRAFSVTCEVQQLLGNNTVRAVAMSATDGLTRGMKVINTGACLSVPVGKATLGRIFNVLGEPVDNLGPVDTDTTFPIHRPAPAFPQLDTNLSIFETGIKVVDLLAPYRRGGKIGLFGGAGVGKTVLIMELINNIAKAHGGVSVFGGVGERTREGNDLYMEMKESGVINEKNIAESKVALVYGQMNEPPGARMRVGLTALAMAEYFRDVNEQDVLLFIDNIFRFVQAGSEVSALLGRMPSAVGYQPTLSTEMGSLQERITSTKKGSITSIQAVYVPADDLTDPAPATTFAHLDATTVLSRGLAAKGIYPAVDPLDSTSTMLQPEIVGEQHYEIAQGVKQTLQRYKELQDIIAILGLDELSEEDRLTVARARKIERFLSQPFFVAEVFTGSPGKYVSLIETIRGFQMILSGDLDGLPEQSFYLVGNIDEVISS.

168-175 (GGAGVGKT) is a binding site for ATP.

It belongs to the ATPase alpha/beta chains family. As to quaternary structure, F-type ATPases have 2 components, CF(1) - the catalytic core - and CF(0) - the membrane proton channel. CF(1) has five subunits: alpha(3), beta(3), gamma(1), delta(1), epsilon(1). CF(0) has four main subunits: a(1), b(1), b'(1) and c(9-12).

Its subcellular location is the plastid. The protein localises to the chloroplast thylakoid membrane. The catalysed reaction is ATP + H2O + 4 H(+)(in) = ADP + phosphate + 5 H(+)(out). In terms of biological role, produces ATP from ADP in the presence of a proton gradient across the membrane. The catalytic sites are hosted primarily by the beta subunits. The chain is ATP synthase subunit beta, chloroplastic from Gnetum parvifolium (Small-leaved jointfir).